Here is a 460-residue protein sequence, read N- to C-terminus: ATP synthase subunit beta (460 aa).

150–157 lines the ATP pocket; it reads GGAGVGKT.

It belongs to the ATPase alpha/beta chains family. As to quaternary structure, F-type ATPases have 2 components, CF(1) - the catalytic core - and CF(0) - the membrane proton channel. CF(1) has five subunits: alpha(3), beta(3), gamma(1), delta(1), epsilon(1). CF(0) has three main subunits: a(1), b(2) and c(9-12). The alpha and beta chains form an alternating ring which encloses part of the gamma chain. CF(1) is attached to CF(0) by a central stalk formed by the gamma and epsilon chains, while a peripheral stalk is formed by the delta and b chains.

Its subcellular location is the cell inner membrane. The enzyme catalyses ATP + H2O + 4 H(+)(in) = ADP + phosphate + 5 H(+)(out). Functionally, produces ATP from ADP in the presence of a proton gradient across the membrane. The catalytic sites are hosted primarily by the beta subunits. In Escherichia coli (strain SMS-3-5 / SECEC), this protein is ATP synthase subunit beta.